The sequence spans 507 residues: 3-octaprenyl-4-hydroxybenzoate carboxy-lyase (507 aa).

Residue asparagine 177 coordinates Mn(2+). Residues 180–182 (IYR), 194–196 (RWL), and 199–200 (RG) contribute to the prenylated FMN site. Glutamate 243 provides a ligand contact to Mn(2+). Aspartate 302 acts as the Proton donor in catalysis.

It belongs to the UbiD family. As to quaternary structure, homohexamer. Prenylated FMN is required as a cofactor. The cofactor is Mn(2+).

The protein localises to the cell membrane. It carries out the reaction a 4-hydroxy-3-(all-trans-polyprenyl)benzoate + H(+) = a 2-(all-trans-polyprenyl)phenol + CO2. It participates in cofactor biosynthesis; ubiquinone biosynthesis. Catalyzes the decarboxylation of 3-octaprenyl-4-hydroxy benzoate to 2-octaprenylphenol, an intermediate step in ubiquinone biosynthesis. This chain is 3-octaprenyl-4-hydroxybenzoate carboxy-lyase, found in Cupriavidus metallidurans (strain ATCC 43123 / DSM 2839 / NBRC 102507 / CH34) (Ralstonia metallidurans).